A 361-amino-acid chain; its full sequence is 5-formaminoimidazole-4-carboxamide-1-(beta)-D-ribofuranosyl 5'-monophosphate synthetase (361 aa).

5-amino-1-(5-phospho-beta-D-ribosyl)imidazole-4-carboxamide contacts are provided by histidine 27 and serine 94. The ATP-grasp domain occupies 116 to 348 (RAILRWEAER…MGQRIAKEIK (233 aa)). ATP-binding positions include 146–208 (PDDI…ANYC) and glutamate 230. Residue asparagine 258 coordinates 5-amino-1-(5-phospho-beta-D-ribosyl)imidazole-4-carboxamide. Positions 297 and 310 each coordinate Mg(2+).

The protein belongs to the phosphohexose mutase family. Mg(2+) serves as cofactor. Requires Mn(2+) as cofactor.

The catalysed reaction is 5-amino-1-(5-phospho-beta-D-ribosyl)imidazole-4-carboxamide + formate + ATP = 5-formamido-1-(5-phospho-D-ribosyl)imidazole-4-carboxamide + ADP + phosphate. Its pathway is purine metabolism; IMP biosynthesis via de novo pathway; 5-formamido-1-(5-phospho-D-ribosyl)imidazole-4-carboxamide from 5-amino-1-(5-phospho-D-ribosyl)imidazole-4-carboxamide (formate route): step 1/1. In terms of biological role, catalyzes the ATP- and formate-dependent formylation of 5-aminoimidazole-4-carboxamide-1-beta-d-ribofuranosyl 5'-monophosphate (AICAR) to 5-formaminoimidazole-4-carboxamide-1-beta-d-ribofuranosyl 5'-monophosphate (FAICAR) in the absence of folates. The sequence is that of 5-formaminoimidazole-4-carboxamide-1-(beta)-D-ribofuranosyl 5'-monophosphate synthetase from Methanococcus maripaludis (strain C5 / ATCC BAA-1333).